The primary structure comprises 40 residues: Snaclec tokaracetin subunit beta (40 aa).

Residues C2 and C13 are joined by a disulfide bond. The C-type lectin domain occupies 9 to 40; it reads YDEHCYRVFQQKMNWEDAEKFCTQQHKGXHLX.

The protein belongs to the snaclec family. As to quaternary structure, heterodimer of subunits alpha and beta; disulfide-linked. As to expression, expressed by the venom gland.

The protein localises to the secreted. Platelet antagonist that specifically and reversibly binds to a site on platelet glycoprotein Ibalpha (GP1BA) close to or identical with the site for vWF binding. It inhibits the binding of vWF to platelets and vWF-dependent shear-induced platelet aggregation. This Protobothrops tokarensis (Tokara habu) protein is Snaclec tokaracetin subunit beta.